Reading from the N-terminus, the 176-residue chain is Cytochrome c oxidase subunit 4 isoform 2, mitochondrial (176 aa).

Residues 1–28 (MLRLTAGRVRSLLAGRATAAFSTSSARM) constitute a mitochondrion transit peptide. At 29 to 106 (ASHDLEVAES…TYSEMKQPSS (78 aa)) the chain is on the mitochondrial matrix side. The helical transmembrane segment at 107–132 (EWKTVFGGIFIFLGFTGLVVWWQALY) threads the bilayer. At 133 to 176 (VYPPRPRTFDDEWKAKQLKRMLDMRVNPIEGFSAKWDYEKGQWK) the chain is on the mitochondrial intermembrane side.

This sequence belongs to the cytochrome c oxidase IV family. Component of the cytochrome c oxidase (complex IV, CIV), a multisubunit enzyme composed of 14 subunits. The complex is composed of a catalytic core of 3 subunits MT-CO1, MT-CO2 and MT-CO3, encoded in the mitochondrial DNA, and 11 supernumerary subunits COX4I, COX5A, COX5B, COX6A, COX6B, COX6C, COX7A, COX7B, COX7C, COX8 and NDUFA4, which are encoded in the nuclear genome. The complex exists as a monomer or a dimer and forms supercomplexes (SCs) in the inner mitochondrial membrane with NADH-ubiquinone oxidoreductase (complex I, CI) and ubiquinol-cytochrome c oxidoreductase (cytochrome b-c1 complex, complex III, CIII), resulting in different assemblies (supercomplex SCI(1)III(2)IV(1) and megacomplex MCI(2)III(2)IV(2)).

It localises to the mitochondrion inner membrane. It participates in energy metabolism; oxidative phosphorylation. In terms of biological role, component of the cytochrome c oxidase, the last enzyme in the mitochondrial electron transport chain which drives oxidative phosphorylation. The respiratory chain contains 3 multisubunit complexes succinate dehydrogenase (complex II, CII), ubiquinol-cytochrome c oxidoreductase (cytochrome b-c1 complex, complex III, CIII) and cytochrome c oxidase (complex IV, CIV), that cooperate to transfer electrons derived from NADH and succinate to molecular oxygen, creating an electrochemical gradient over the inner membrane that drives transmembrane transport and the ATP synthase. Cytochrome c oxidase is the component of the respiratory chain that catalyzes the reduction of oxygen to water. Electrons originating from reduced cytochrome c in the intermembrane space (IMS) are transferred via the dinuclear copper A center (CU(A)) of subunit 2 and heme A of subunit 1 to the active site in subunit 1, a binuclear center (BNC) formed by heme A3 and copper B (CU(B)). The BNC reduces molecular oxygen to 2 water molecules using 4 electrons from cytochrome c in the IMS and 4 protons from the mitochondrial matrix. This Thunnus obesus (Bigeye tuna) protein is Cytochrome c oxidase subunit 4 isoform 2, mitochondrial.